A 364-amino-acid polypeptide reads, in one-letter code: Anthranilate phosphoribosyltransferase (364 aa).

5-phospho-alpha-D-ribose 1-diphosphate-binding positions include Gly101, 104 to 105 (GD), Thr109, 111 to 114 (NLST), 129 to 137 (KHGNRAASS), and Gly141. An anthranilate-binding site is contributed by Gly101. Mg(2+) is bound at residue Ser113. Asn132 is an anthranilate binding site. Arg187 lines the anthranilate pocket. 2 residues coordinate Mg(2+): Asp245 and Glu246.

This sequence belongs to the anthranilate phosphoribosyltransferase family. As to quaternary structure, homodimer. Mg(2+) is required as a cofactor.

The catalysed reaction is N-(5-phospho-beta-D-ribosyl)anthranilate + diphosphate = 5-phospho-alpha-D-ribose 1-diphosphate + anthranilate. It participates in amino-acid biosynthesis; L-tryptophan biosynthesis; L-tryptophan from chorismate: step 2/5. Functionally, catalyzes the transfer of the phosphoribosyl group of 5-phosphorylribose-1-pyrophosphate (PRPP) to anthranilate to yield N-(5'-phosphoribosyl)-anthranilate (PRA). The chain is Anthranilate phosphoribosyltransferase from Mycolicibacterium vanbaalenii (strain DSM 7251 / JCM 13017 / BCRC 16820 / KCTC 9966 / NRRL B-24157 / PYR-1) (Mycobacterium vanbaalenii).